The primary structure comprises 788 residues: Multifunctional tryptophan biosynthesis protein (788 aa).

The 196-residue stretch at 12-207 (DILMIDNFDS…MKLKGGTWEE (196 aa)) folds into the Glutamine amidotransferase type-1 domain. Position 63–65 (63–65 (GPG)) interacts with L-glutamine. Cys91 acts as the Nucleophile; for GATase activity in catalysis. 141 to 142 (SL) lines the L-glutamine pocket. Residues His181 and Glu183 each act as for GATase activity in the active site. An indole-3-glycerol phosphate synthase region spans residues 238-503 (ILEKICAQRQ…DTRAFIRQLL (266 aa)). Positions 520-788 (LSRSCGIRTE…RAFVKAAKKL (269 aa)) are N-(5'-phosphoribosyl)anthranilate isomerase.

It catalyses the reaction N-(5-phospho-beta-D-ribosyl)anthranilate = 1-(2-carboxyphenylamino)-1-deoxy-D-ribulose 5-phosphate. The enzyme catalyses 1-(2-carboxyphenylamino)-1-deoxy-D-ribulose 5-phosphate + H(+) = (1S,2R)-1-C-(indol-3-yl)glycerol 3-phosphate + CO2 + H2O. The catalysed reaction is chorismate + L-glutamine = anthranilate + pyruvate + L-glutamate + H(+). Its pathway is amino-acid biosynthesis; L-tryptophan biosynthesis; L-tryptophan from chorismate: step 1/5. The protein operates within amino-acid biosynthesis; L-tryptophan biosynthesis; L-tryptophan from chorismate: step 3/5. It functions in the pathway amino-acid biosynthesis; L-tryptophan biosynthesis; L-tryptophan from chorismate: step 4/5. Functionally, trifunctional enzyme bearing the Gln amidotransferase (GATase) domain of anthranilate synthase, indole-glycerolphosphate synthase, and phosphoribosylanthranilate isomerase activities. In Phanerodontia chrysosporium (White-rot fungus), this protein is Multifunctional tryptophan biosynthesis protein (TRPC).